A 1770-amino-acid chain; its full sequence is Transposon Ty2-DR3 Gag-Pol polyprotein (1770 aa).

6 stretches are compositionally biased toward polar residues: residues Met1–His11, Ala19–Asn39, Lys49–Thr60, Val366–Lys390, Ile399–Val408, and Glu415–Gln435. Disordered regions lie at residues Met1–Gly89 and Ser355–Glu449. Positions Glu295 to His397 are RNA-binding. Catalysis depends on Asp457, which acts as the For protease activity; shared with dimeric partner. An integrase-type zinc finger-like region spans residues Asn579 to Cys636. One can recognise an Integrase catalytic domain in the interval Glu656–Pro831. Mg(2+) contacts are provided by Asp667 and Asp732. Disordered regions lie at residues Gly1005–Leu1038 and Gly1057–Glu1205. Polar residues-rich tracts occupy residues Glu1009–Arg1024 and Gln1065–Ser1082. The short motif at Lys1193–Arg1227 is the Bipartite nuclear localization signal element. Residues Asn1353–Gln1491 form the Reverse transcriptase Ty1/copia-type domain. Mg(2+)-binding residues include Asp1361, Asp1442, Asp1443, Asp1625, Glu1667, and Asp1700. Residues Asp1625–Lys1767 enclose the RNase H Ty1/copia-type domain.

In terms of assembly, the capsid protein forms a homotrimer, from which the VLPs are assembled. The protease is a homodimer, whose active site consists of two apposed aspartic acid residues. Post-translationally, initially, virus-like particles (VLPs) are composed of the structural unprocessed proteins Gag and Gag-Pol, and also contain the host initiator methionine tRNA (tRNA(i)-Met) which serves as a primer for minus-strand DNA synthesis, and a dimer of genomic Ty RNA. Processing of the polyproteins occurs within the particle and proceeds by an ordered pathway, called maturation. First, the protease (PR) is released by autocatalytic cleavage of the Gag-Pol polyprotein, and this cleavage is a prerequisite for subsequent processing at the remaining sites to release the mature structural and catalytic proteins. Maturation takes place prior to the RT reaction and is required to produce transposition-competent VLPs.

The protein resides in the cytoplasm. The protein localises to the nucleus. It carries out the reaction DNA(n) + a 2'-deoxyribonucleoside 5'-triphosphate = DNA(n+1) + diphosphate. It catalyses the reaction Endonucleolytic cleavage to 5'-phosphomonoester.. In terms of biological role, capsid protein (CA) is the structural component of the virus-like particle (VLP), forming the shell that encapsulates the retrotransposons dimeric RNA genome. The particles are assembled from trimer-clustered units and there are holes in the capsid shells that allow for the diffusion of macromolecules. CA also has nucleocapsid-like chaperone activity, promoting primer tRNA(i)-Met annealing to the multipartite primer-binding site (PBS), dimerization of Ty2 RNA and initiation of reverse transcription. Its function is as follows. The aspartyl protease (PR) mediates the proteolytic cleavages of the Gag and Gag-Pol polyproteins after assembly of the VLP. Reverse transcriptase/ribonuclease H (RT) is a multifunctional enzyme that catalyzes the conversion of the retro-elements RNA genome into dsDNA within the VLP. The enzyme displays a DNA polymerase activity that can copy either DNA or RNA templates, and a ribonuclease H (RNase H) activity that cleaves the RNA strand of RNA-DNA heteroduplexes during plus-strand synthesis and hydrolyzes RNA primers. The conversion leads to a linear dsDNA copy of the retrotransposon that includes long terminal repeats (LTRs) at both ends. Functionally, integrase (IN) targets the VLP to the nucleus, where a subparticle preintegration complex (PIC) containing at least integrase and the newly synthesized dsDNA copy of the retrotransposon must transit the nuclear membrane. Once in the nucleus, integrase performs the integration of the dsDNA into the host genome. This Saccharomyces cerevisiae (strain ATCC 204508 / S288c) (Baker's yeast) protein is Transposon Ty2-DR3 Gag-Pol polyprotein (TY2B-DR3).